A 490-amino-acid polypeptide reads, in one-letter code: Katanin p60 ATPase-containing subunit A-like 1 (490 aa).

The residue at position 1 (methionine 1) is an N-acetylmethionine. Residues 95 to 184 (DPAVWPPPVP…DGEMPKFDGA (90 aa)) form a disordered region. Residues 116–127 (PNREVRPLRKEM) show a composition bias toward basic and acidic residues. The segment covering 128–139 (AGVGARGPVGRA) has biased composition (low complexity). The segment covering 143-169 (SKSEKPSTSRDKDYRARGRDDKGRKNM) has biased composition (basic and acidic residues). Residue serine 174 is modified to Phosphoserine. Residue 248 to 255 (GPPGTGKT) coordinates ATP.

The protein belongs to the AAA ATPase family. Katanin p60 subunit A1 subfamily. A-like 1 sub-subfamily. Interacts with KATNB1 and KATNBL1. In terms of tissue distribution, expressed in testis, restricted to Sertoli cells (at protein level).

The protein resides in the cytoplasm. It localises to the cytoskeleton. It is found in the spindle pole. The protein localises to the spindle. The catalysed reaction is n ATP + n H2O + a microtubule = n ADP + n phosphate + (n+1) alpha/beta tubulin heterodimers.. Functionally, regulates microtubule dynamics in Sertoli cells, a process that is essential for spermiogenesis and male fertility. Severs microtubules in an ATP-dependent manner, promoting rapid reorganization of cellular microtubule arrays. Has microtubule-severing activity in vitro. The chain is Katanin p60 ATPase-containing subunit A-like 1 from Homo sapiens (Human).